The chain runs to 179 residues: Large ribosomal subunit protein uL5 (179 aa).

It belongs to the universal ribosomal protein uL5 family. In terms of assembly, part of the 50S ribosomal subunit; part of the 5S rRNA/L5/L18/L25 subcomplex. Contacts the 5S rRNA and the P site tRNA. Forms a bridge to the 30S subunit in the 70S ribosome.

In terms of biological role, this is one of the proteins that bind and probably mediate the attachment of the 5S RNA into the large ribosomal subunit, where it forms part of the central protuberance. In the 70S ribosome it contacts protein S13 of the 30S subunit (bridge B1b), connecting the 2 subunits; this bridge is implicated in subunit movement. Contacts the P site tRNA; the 5S rRNA and some of its associated proteins might help stabilize positioning of ribosome-bound tRNAs. The protein is Large ribosomal subunit protein uL5 of Prochlorococcus marinus (strain MIT 9215).